A 285-amino-acid chain; its full sequence is 2,3,4,5-tetrahydropyridine-2,6-dicarboxylate N-succinyltransferase (285 aa).

The substrate site is built by Arg111 and Asp148.

This sequence belongs to the transferase hexapeptide repeat family. Homotrimer.

It is found in the cytoplasm. The enzyme catalyses (S)-2,3,4,5-tetrahydrodipicolinate + succinyl-CoA + H2O = (S)-2-succinylamino-6-oxoheptanedioate + CoA. Its pathway is amino-acid biosynthesis; L-lysine biosynthesis via DAP pathway; LL-2,6-diaminopimelate from (S)-tetrahydrodipicolinate (succinylase route): step 1/3. The protein is 2,3,4,5-tetrahydropyridine-2,6-dicarboxylate N-succinyltransferase of Sinorhizobium medicae (strain WSM419) (Ensifer medicae).